The chain runs to 538 residues: Neutral protease B (538 aa).

Residues 1-28 form the signal peptide; sequence MRNLTKTSLLLAGLCTAAQMVFVTHASA. A propeptide spans 29–223 (activation peptide); that stretch reads EESIEYDHTY…VIESFNAIHE (195 aa). Asp365 serves as a coordination point for Ca(2+). His369 provides a ligand contact to Zn(2+). Glu370 is a catalytic residue. Residues His373 and Glu393 each coordinate Zn(2+). Residues Asp404, Asp406, Asp407, Glu409, Glu412, Tyr415, Thr416, Ile419, and Asp422 each coordinate Ca(2+). The disordered stretch occupies residues 421-441; the sequence is GDSLRSLEDPSKQGNPDHYSN. The Proton donor role is filled by His453.

Belongs to the peptidase M4 family. Zn(2+) serves as cofactor.

The protein resides in the secreted. Protease activity can be inhibited in vitro by either a zinc specific chelator, 1,10-phenanthroline, or a metal chelator, EDTA. The enzyme is resistant to phenylmethylsulfonyl fluoride and iodoacetic acid. In terms of biological role, protease able to cleave casein in vitro. The sequence is that of Neutral protease B from Bacillus subtilis (strain 168).